Reading from the N-terminus, the 299-residue chain is Tyrosine recombinase XerC (299 aa).

The Core-binding (CB) domain occupies 1-85; the sequence is MKRQLEAYCA…AVRGLYRYLN (85 aa). One can recognise a Tyr recombinase domain in the interval 106 to 285; the sequence is RLPKVLDTDR…DFQHLAAVYD (180 aa). Residues Arg146, Lys170, His237, Arg240, and His263 contribute to the active site. Tyr272 functions as the O-(3'-phospho-DNA)-tyrosine intermediate in the catalytic mechanism.

Belongs to the 'phage' integrase family. XerC subfamily. In terms of assembly, forms a cyclic heterotetrameric complex composed of two molecules of XerC and two molecules of XerD.

It localises to the cytoplasm. In terms of biological role, site-specific tyrosine recombinase, which acts by catalyzing the cutting and rejoining of the recombining DNA molecules. The XerC-XerD complex is essential to convert dimers of the bacterial chromosome into monomers to permit their segregation at cell division. It also contributes to the segregational stability of plasmids. The chain is Tyrosine recombinase XerC from Pseudomonas putida (strain ATCC 700007 / DSM 6899 / JCM 31910 / BCRC 17059 / LMG 24140 / F1).